We begin with the raw amino-acid sequence, 612 residues long: MADNKGTENDWFLVEATDCEETLEETSLGDLDNVSCVSDLSDLLDEAPQSQGNSLELFHKQESLESEQELNALKRKLLYSPQARSADETDIASISPRLETISITKQDKKRYRRQLFSQDDSGLELSLLQDETENIDESTQVDQQQKEHTGEVGAAGVNILKASNIRAALLSRFKDTAGVSFTDLTRSYKSNKTCCGDWVLAVWGVRENLIDSVKELLQTHCVYIQLEHAVTEKNRFLFLLVRFKAQKSRETVIKLITTILPVDASYILSEPPKSRSVAAALFWYKRSMSSTVFTWGTTLEWIAQQTLINHQLDSESPFELCKMVQWAYDNGHTEECKIAYYYAVLADEDENARAFLSSNSQAKYVKDCAQMVRHYLRAEMAQMSMSEWIFRKLDNVEGSGNWKEIVRFLRFQEVEFISFMIAFKDLLCGKPKKNCLLIFGPPNTGKSMFCTSLLKLLGGKVISYCNSKSQFWLQPLADAKIGLLDDATKPCWDYMDIYMRNALDGNTICIDLKHRAPQQIKCPPLLITSNIDVKSDTCWMYLHSRISAFKFAHEFPFKDNGDPGFSLTDENWKSFFERFWQQLELSDQEDEGNDGKPQQSLRLTARAANEPI.

The Nuclear localization signal signature appears at 74-76 (KRK). Phosphoserine; by host occurs at positions 80 and 95. Residues 94 to 103 (ISPRLETISI) carry the Nuclear export signal motif. Positions 148–315 (HTGEVGAAGV…TLINHQLDSE (168 aa)) are DNA-binding region. The region spanning 414–564 (VEFISFMIAF…FPFKDNGDPG (151 aa)) is the SF3 helicase domain. 440–447 (GPPNTGKS) contributes to the ATP binding site. Lys-521 participates in a covalent cross-link: Glycyl lysine isopeptide (Lys-Gly) (interchain with G-Cter in SUMO). The tract at residues 587–612 (DQEDEGNDGKPQQSLRLTARAANEPI) is disordered.

This sequence belongs to the papillomaviridae E1 protein family. Can form hexamers. Interacts with E2 protein; this interaction increases E1 DNA binding specificity. Interacts with host DNA polymerase subunit POLA2. Interacts with host single stranded DNA-binding protein RPA1. Interacts with host TOP1; this interaction stimulates the enzymatic activity of TOP1. Phosphorylated. In terms of processing, sumoylated.

It localises to the host nucleus. The catalysed reaction is Couples ATP hydrolysis with the unwinding of duplex DNA by translocating in the 3'-5' direction.. It carries out the reaction ATP + H2O = ADP + phosphate + H(+). Its function is as follows. ATP-dependent DNA 3'-5' helicase required for initiation of viral DNA replication. It forms a complex with the viral E2 protein. The E1-E2 complex binds to the replication origin which contains binding sites for both proteins. During the initial step, a dimer of E1 interacts with a dimer of protein E2 leading to a complex that binds the viral origin of replication with high specificity. Then, a second dimer of E1 displaces the E2 dimer in an ATP-dependent manner to form the E1 tetramer. Following this, two E1 monomers are added to each half of the site, which results in the formation of two E1 trimers on the viral ori. Subsequently, two hexamers will be created. The double hexamer acts as a bi-directional helicase machinery and unwinds the viral DNA and then recruits the host DNA polymerase to start replication. The protein is Replication protein E1 of Homo sapiens (Human).